Here is a 242-residue protein sequence, read N- to C-terminus: MVPSLLNLPFAELEVGQHLYWQIGNLNLHGQVFLSSWVVIGLLLLLVVSGTRKMERDPKGVQNLLEYLWDYLRELAREQIGEKAYRDWLPFVGTLFLFIFVCNWGGALIPWRLVELPNGELGAPTADINTTVAMALLVSLSYFYAGLSRKGLRYFEYYVEPTPIMLPFKIIEDFTKPLSLSFRLFGNILADELVVAVLAFLVPVLVPLPAMFLGLFTSAIQALIFATLAANYIGEAVHEEAH.

5 consecutive transmembrane segments (helical) span residues 28 to 48 (LHGQVFLSSWVVIGLLLLLVV), 89 to 109 (LPFVGTLFLFIFVCNWGGALI), 128 to 148 (INTTVAMALLVSLSYFYAGLS), 193 to 213 (LVVAVLAFLVPVLVPLPAMFL), and 214 to 234 (GLFTSAIQALIFATLAANYIG).

Belongs to the ATPase A chain family. F-type ATPases have 2 components, CF(1) - the catalytic core - and CF(0) - the membrane proton channel. CF(1) has five subunits: alpha(3), beta(3), gamma(1), delta(1), epsilon(1). CF(0) has four main subunits: a, b, b' and c.

It is found in the cellular thylakoid membrane. In terms of biological role, key component of the proton channel; it plays a direct role in the translocation of protons across the membrane. This is ATP synthase subunit a from Synechococcus sp. (strain WH7803).